A 531-amino-acid chain; its full sequence is Putative lipase ATG15 (531 aa).

At Met-1 to Tyr-11 the chain is on the cytoplasmic side. A helical; Signal-anchor for type II membrane protein membrane pass occupies residues Ser-12–Ile-31. Over Asn-32–Ile-531 the chain is Lumenal. 2 N-linked (GlcNAc...) asparagine glycosylation sites follow: Asn-178 and Asn-207. Ser-340 (charge relay system) is an active-site residue. The interval Val-482–Thr-513 is disordered. Residues Ser-489 to Thr-502 show a composition bias toward low complexity.

This sequence belongs to the AB hydrolase superfamily. Lipase family. In terms of assembly, binds to both phosphatidylinositol (PI) and phosphatidylinositol 3,5-bisphosphate (PIP2).

The protein resides in the endosome. It is found in the multivesicular body membrane. The protein localises to the prevacuolar compartment membrane. The enzyme catalyses a triacylglycerol + H2O = a diacylglycerol + a fatty acid + H(+). Functionally, lipase which is essential for lysis of subvacuolar cytoplasm to vacuole targeted bodies and intravacuolar autophagic bodies. Involved in the lysis of intravacuolar multivesicular body (MVB) vesicles. The intravacuolar membrane disintegration by ATG15 is critical to life span extension. The chain is Putative lipase ATG15 (ATG15) from Kluyveromyces lactis (strain ATCC 8585 / CBS 2359 / DSM 70799 / NBRC 1267 / NRRL Y-1140 / WM37) (Yeast).